The primary structure comprises 72 residues: Translation initiation factor IF-1 (72 aa).

An S1-like domain is found at 1-72; sequence MSKDDVIEID…DKGRITYRYK (72 aa).

Belongs to the IF-1 family. Component of the 30S ribosomal translation pre-initiation complex which assembles on the 30S ribosome in the order IF-2 and IF-3, IF-1 and N-formylmethionyl-tRNA(fMet); mRNA recruitment can occur at any time during PIC assembly.

Its subcellular location is the cytoplasm. Its function is as follows. One of the essential components for the initiation of protein synthesis. Stabilizes the binding of IF-2 and IF-3 on the 30S subunit to which N-formylmethionyl-tRNA(fMet) subsequently binds. Helps modulate mRNA selection, yielding the 30S pre-initiation complex (PIC). Upon addition of the 50S ribosomal subunit IF-1, IF-2 and IF-3 are released leaving the mature 70S translation initiation complex. This is Translation initiation factor IF-1 from Campylobacter hominis (strain ATCC BAA-381 / DSM 21671 / CCUG 45161 / LMG 19568 / NCTC 13146 / CH001A).